The sequence spans 506 residues: H/ACA ribonucleoprotein complex subunit DKC1 (506 aa).

The interval Met-1–Gln-26 is disordered. Asp-120 acts as the Nucleophile in catalysis. The 76-residue stretch at His-291–Met-366 folds into the PUA domain. 2 disordered regions span residues Gly-391 to Gly-410 and Val-419 to Asp-506. Basic and acidic residues predominate over residues Lys-421–Ser-434. The segment covering Glu-457–Lys-466 has biased composition (basic residues).

This sequence belongs to the pseudouridine synthase TruB family. Part of the H/ACA small nucleolar ribonucleoprotein (H/ACA snoRNP) complex. The complex binds a box H/ACA small nucleolar RNA (snoRNA), which may target the specific site of modification within the RNA substrate.

The protein resides in the nucleus. It localises to the nucleolus. The protein localises to the cajal body. It carries out the reaction uridine in 5S rRNA = pseudouridine in 5S rRNA. Functionally, catalytic subunit of H/ACA small nucleolar ribonucleoprotein (H/ACA snoRNP) complex, which catalyzes pseudouridylation of rRNA. This involves the isomerization of uridine such that the ribose is subsequently attached to C5, instead of the normal N1. Pseudouridine ('psi') residues may serve to stabilize the conformation of rRNAs. Required for ribosome biogenesis and telomere maintenance. The polypeptide is H/ACA ribonucleoprotein complex subunit DKC1 (Danio rerio (Zebrafish)).